A 334-amino-acid chain; its full sequence is ABC transporter L-arabinose-binding periplasmic protein (334 aa).

Positions 1-30 (MNRTIRRHTLRALLAALCIAPLGMQGAARA) are cleaved as a signal peptide.

The protein belongs to the bacterial solute-binding protein 2 family. In terms of assembly, the complex is composed of two ATP-binding proteins (AraG), two transmembrane proteins (AraH) and a solute-binding protein (AraF).

The protein resides in the periplasm. Part of the ABC transporter complex AraFGH involved in L-arabinose import. Binds with high affinity to L-arabinose. This is ABC transporter L-arabinose-binding periplasmic protein (araF) from Azospirillum brasilense.